The following is a 246-amino-acid chain: Probable H/ACA ribonucleoprotein complex subunit 1-like protein (246 aa).

Disordered regions lie at residues 1 to 61 (MSFR…GGYD) and 155 to 246 (PQVG…TKFD). RGG-box stretches follow at residues 4 to 59 (RGGR…GRGG) and 161 to 223 (RGRG…RGRG). The span at 168-180 (RGGDRGRGGDRGR) shows a compositional bias: basic and acidic residues. Residues 181–221 (GGFGGRGGGGGGFRGGSRGGFGGGDRGGFRGGRGGDFGGRG) are compositionally biased toward gly residues.

Belongs to the GAR1 family. In terms of assembly, component of the small nucleolar ribonucleoprotein particle containing H/ACA-type snoRNAs (H/ACA snoRNPs).

Its subcellular location is the nucleus. It localises to the nucleolus. In terms of biological role, required for ribosome biogenesis. Part of a complex which catalyzes pseudouridylation of rRNA. This involves the isomerization of uridine such that the ribose is subsequently attached to C5, instead of the normal N1. Pseudouridine ('psi') residues may serve to stabilize the conformation of rRNAs. The sequence is that of Probable H/ACA ribonucleoprotein complex subunit 1-like protein from Caenorhabditis briggsae.